Here is a 476-residue protein sequence, read N- to C-terminus: Aspartyl/glutamyl-tRNA(Asn/Gln) amidotransferase subunit B (476 aa).

Belongs to the GatB/GatE family. GatB subfamily. As to quaternary structure, heterotrimer of A, B and C subunits.

It carries out the reaction L-glutamyl-tRNA(Gln) + L-glutamine + ATP + H2O = L-glutaminyl-tRNA(Gln) + L-glutamate + ADP + phosphate + H(+). The enzyme catalyses L-aspartyl-tRNA(Asn) + L-glutamine + ATP + H2O = L-asparaginyl-tRNA(Asn) + L-glutamate + ADP + phosphate + 2 H(+). Functionally, allows the formation of correctly charged Asn-tRNA(Asn) or Gln-tRNA(Gln) through the transamidation of misacylated Asp-tRNA(Asn) or Glu-tRNA(Gln) in organisms which lack either or both of asparaginyl-tRNA or glutaminyl-tRNA synthetases. The reaction takes place in the presence of glutamine and ATP through an activated phospho-Asp-tRNA(Asn) or phospho-Glu-tRNA(Gln). In Enterococcus faecalis (strain ATCC 700802 / V583), this protein is Aspartyl/glutamyl-tRNA(Asn/Gln) amidotransferase subunit B.